Consider the following 118-residue polypeptide: Large ribosomal subunit protein uL18 (118 aa).

The disordered stretch occupies residues 1 to 22 (MISKPDKNKLRQKRHRRVRGKL). Over residues 10-20 (LRQKRHRRVRG) the composition is skewed to basic residues.

The protein belongs to the universal ribosomal protein uL18 family. In terms of assembly, part of the 50S ribosomal subunit; part of the 5S rRNA/L5/L18/L25 subcomplex. Contacts the 5S and 23S rRNAs.

In terms of biological role, this is one of the proteins that bind and probably mediate the attachment of the 5S RNA into the large ribosomal subunit, where it forms part of the central protuberance. The chain is Large ribosomal subunit protein uL18 from Streptococcus thermophilus (strain ATCC BAA-491 / LMD-9).